Here is a 184-residue protein sequence, read N- to C-terminus: ATP-dependent protease subunit HslV (184 aa).

The active site involves Thr12. Na(+)-binding residues include Ala167, Cys170, and Thr173.

This sequence belongs to the peptidase T1B family. HslV subfamily. A double ring-shaped homohexamer of HslV is capped on each side by a ring-shaped HslU homohexamer. The assembly of the HslU/HslV complex is dependent on binding of ATP.

It localises to the cytoplasm. The catalysed reaction is ATP-dependent cleavage of peptide bonds with broad specificity.. With respect to regulation, allosterically activated by HslU binding. In terms of biological role, protease subunit of a proteasome-like degradation complex believed to be a general protein degrading machinery. This chain is ATP-dependent protease subunit HslV, found in Wolbachia pipientis subsp. Culex pipiens (strain wPip).